The sequence spans 157 residues: Ribosomal RNA large subunit methyltransferase H (157 aa).

S-adenosyl-L-methionine is bound by residues L73, G104, and 123 to 128 (LGPLTL).

It belongs to the RNA methyltransferase RlmH family. As to quaternary structure, homodimer.

It localises to the cytoplasm. It catalyses the reaction pseudouridine(1915) in 23S rRNA + S-adenosyl-L-methionine = N(3)-methylpseudouridine(1915) in 23S rRNA + S-adenosyl-L-homocysteine + H(+). Its function is as follows. Specifically methylates the pseudouridine at position 1915 (m3Psi1915) in 23S rRNA. In Xylella fastidiosa (strain M23), this protein is Ribosomal RNA large subunit methyltransferase H.